Consider the following 161-residue polypeptide: Endoribonuclease YbeY (161 aa).

Residues His-121, His-125, and His-131 each contribute to the Zn(2+) site.

It belongs to the endoribonuclease YbeY family. Zn(2+) serves as cofactor.

Its subcellular location is the cytoplasm. In terms of biological role, single strand-specific metallo-endoribonuclease involved in late-stage 70S ribosome quality control and in maturation of the 3' terminus of the 16S rRNA. The sequence is that of Endoribonuclease YbeY from Xylella fastidiosa (strain 9a5c).